The sequence spans 615 residues: Putative binding protein BRA0576/BS1330_II0571 (615 aa).

A signal peptide spans 1 to 29 (MLNRFIAFFRSVFLIGLVATAFGALPARA).

This sequence belongs to the bacterial solute-binding protein 5 family.

Its subcellular location is the periplasm. The sequence is that of Putative binding protein BRA0576/BS1330_II0571 from Brucella suis biovar 1 (strain 1330).